A 577-amino-acid polypeptide reads, in one-letter code: Proline--tRNA ligase (577 aa).

Belongs to the class-II aminoacyl-tRNA synthetase family. ProS type 1 subfamily. As to quaternary structure, homodimer.

Its subcellular location is the cytoplasm. The enzyme catalyses tRNA(Pro) + L-proline + ATP = L-prolyl-tRNA(Pro) + AMP + diphosphate. Catalyzes the attachment of proline to tRNA(Pro) in a two-step reaction: proline is first activated by ATP to form Pro-AMP and then transferred to the acceptor end of tRNA(Pro). As ProRS can inadvertently accommodate and process non-cognate amino acids such as alanine and cysteine, to avoid such errors it has two additional distinct editing activities against alanine. One activity is designated as 'pretransfer' editing and involves the tRNA(Pro)-independent hydrolysis of activated Ala-AMP. The other activity is designated 'posttransfer' editing and involves deacylation of mischarged Ala-tRNA(Pro). The misacylated Cys-tRNA(Pro) is not edited by ProRS. This chain is Proline--tRNA ligase, found in Helicobacter pylori (strain ATCC 700392 / 26695) (Campylobacter pylori).